A 357-amino-acid chain; its full sequence is UDP-N-acetylglucosamine--N-acetylmuramyl-(pentapeptide) pyrophosphoryl-undecaprenol N-acetylglucosamine transferase (357 aa).

Residues 7-9, asparagine 119, arginine 159, serine 187, isoleucine 241, and glutamine 286 contribute to the UDP-N-acetyl-alpha-D-glucosamine site; that span reads TGG.

This sequence belongs to the glycosyltransferase 28 family. MurG subfamily.

The protein localises to the cell inner membrane. The catalysed reaction is di-trans,octa-cis-undecaprenyl diphospho-N-acetyl-alpha-D-muramoyl-L-alanyl-D-glutamyl-meso-2,6-diaminopimeloyl-D-alanyl-D-alanine + UDP-N-acetyl-alpha-D-glucosamine = di-trans,octa-cis-undecaprenyl diphospho-[N-acetyl-alpha-D-glucosaminyl-(1-&gt;4)]-N-acetyl-alpha-D-muramoyl-L-alanyl-D-glutamyl-meso-2,6-diaminopimeloyl-D-alanyl-D-alanine + UDP + H(+). The protein operates within cell wall biogenesis; peptidoglycan biosynthesis. In terms of biological role, cell wall formation. Catalyzes the transfer of a GlcNAc subunit on undecaprenyl-pyrophosphoryl-MurNAc-pentapeptide (lipid intermediate I) to form undecaprenyl-pyrophosphoryl-MurNAc-(pentapeptide)GlcNAc (lipid intermediate II). The polypeptide is UDP-N-acetylglucosamine--N-acetylmuramyl-(pentapeptide) pyrophosphoryl-undecaprenol N-acetylglucosamine transferase (Nitrosomonas europaea (strain ATCC 19718 / CIP 103999 / KCTC 2705 / NBRC 14298)).